The chain runs to 67 residues: VRDGYIVKPTNCVIHCIPFSPGCDKDCKEKGAASGYCQAFGKHGNGCWCIDLPDKVPIKDPNQDCTR.

Residues Arg2–Thr66 form the LCN-type CS-alpha/beta domain. 4 disulfides stabilise this stretch: Cys12/Cys65, Cys16/Cys37, Cys23/Cys47, and Cys27/Cys49. Arg67 is a propeptide (removed by a carboxypeptidase).

Belongs to the long (4 C-C) scorpion toxin superfamily. Sodium channel inhibitor family. Alpha subfamily. As to expression, expressed by the venom gland.

The protein resides in the secreted. Its function is as follows. Alpha toxins bind voltage-independently at site-3 of sodium channels (Nav) and inhibit the inactivation of the activated channels, thereby blocking neuronal transmission. This Androctonus crassicauda (Arabian fat-tailed scorpion) protein is Putative sodium channel alpha-toxin Acra7.